Consider the following 325-residue polypeptide: Elongation factor Ts, mitochondrial (325 aa).

The transit peptide at 1 to 45 directs the protein to the mitochondrion; the sequence is MSLLRSLRVFLVARTGSYPAGSLLRQSPQPRHTFYAGPRLSASAS. Residues lysine 76, lysine 133, and lysine 192 each carry the N6-succinyllysine modification. At serine 270 the chain carries Phosphoserine. Threonine 324 carries the phosphothreonine modification.

This sequence belongs to the EF-Ts family. Expressed in all tissues, with the highest levels of expression in skeletal muscle, liver and kidney.

The protein localises to the mitochondrion. In terms of biological role, associates with the EF-Tu.GDP complex and induces the exchange of GDP to GTP. It remains bound to the aminoacyl-tRNA.EF-Tu.GTP complex up to the GTP hydrolysis stage on the ribosome. The protein is Elongation factor Ts, mitochondrial of Homo sapiens (Human).